Here is a 257-residue protein sequence, read N- to C-terminus: Discoidin-2 (257 aa).

The beta-sandwich stretch occupies residues 1–155 (MSVPAGSVSC…SLRWELYALP (155 aa)). Positions 10–154 (CLANALLNLR…ISLRWELYAL (145 aa)) constitute an F5/8 type C domain. The Ca(2+) site is built by Asn39, Ser40, and Asp47. Positions 81-83 (RGD) match the Cell attachment site motif. Phosphohistidine is present on His84. A linker region spans residues 156 to 162 (VKSYSNP). Positions 163–257 (SVQVGEVSIG…FDYVAVEFNN (95 aa)) are lectin-like. Asp209, Arg218, and Trp238 together coordinate a carbohydrate.

Homotrimer. The N-terminus is blocked. In terms of tissue distribution, maturing spore cells.

Galactose-binding lectin. May be necessary for the primary process of spore formation and may be involved in spore coat formation. The polypeptide is Discoidin-2 (dscE) (Dictyostelium discoideum (Social amoeba)).